We begin with the raw amino-acid sequence, 167 residues long: Type IV major pilin protein PilE (167 aa).

The propeptide at 1–7 is leader sequence; that stretch reads MNTLQKG. At phenylalanine 8 the chain carries N-methylphenylalanine. The chain crosses the membrane as a helical span at residues 8–28; it reads FTLIELMIVIAIVGILAAVAL. Serine 70 carries an O-linked (GlcNAc...) serine glycan. An intrachain disulfide couples cysteine 127 to cysteine 160.

Belongs to the N-Me-Phe pilin family. In terms of assembly, the pili are polar flexible filaments of about 5.4 nanometers diameter and 2.5 micrometers average length; they consist of only a single polypeptide chain arranged in a helical configuration of five subunits per turn in the assembled pilus.

The protein resides in the fimbrium. It is found in the membrane. In terms of biological role, major component of the type IV pilus (T4P) that plays a role in cellular adherence, microcolony formation, resistance to neutrophil mediated killing, twitching motility as well as transformation. Mediates the attachment and the formation of bacterial microcolonies on host epithelial cells. Mechanistically, pili retractation induces host NF-kappa-B activation in infected cells, which is temporally associated with the formation of gonococcal microcolonies. This is Type IV major pilin protein PilE (pilE) from Neisseria gonorrhoeae.